A 458-amino-acid polypeptide reads, in one-letter code: Glutamyl-tRNA reductase (458 aa).

Substrate contacts are provided by residues 49–52 (TCNR), Ser111, 116–118 (ETE), and Gln122. The Nucleophile role is filled by Cys50. An NADP(+)-binding site is contributed by 191 to 196 (GAGKMS). Composition is skewed to basic and acidic residues over residues 426–440 (IPKD…KEVE) and 448–458 (ERGHHESDFHN). The disordered stretch occupies residues 426–458 (IPKDGEEHSSSKEVESVTQSSTERGHHESDFHN).

It belongs to the glutamyl-tRNA reductase family. In terms of assembly, homodimer.

The enzyme catalyses (S)-4-amino-5-oxopentanoate + tRNA(Glu) + NADP(+) = L-glutamyl-tRNA(Glu) + NADPH + H(+). It functions in the pathway porphyrin-containing compound metabolism; protoporphyrin-IX biosynthesis; 5-aminolevulinate from L-glutamyl-tRNA(Glu): step 1/2. Its function is as follows. Catalyzes the NADPH-dependent reduction of glutamyl-tRNA(Glu) to glutamate 1-semialdehyde (GSA). This Natranaerobius thermophilus (strain ATCC BAA-1301 / DSM 18059 / JW/NM-WN-LF) protein is Glutamyl-tRNA reductase.